Reading from the N-terminus, the 1807-residue chain is Vitellogenin-2 (1807 aa).

The signal sequence occupies residues 1-16 (MWFPVTLLFLAGVAVA). The Vitellogenin domain occupies 24-819 (WETGNEYQYS…LIPKYVYVGV (796 aa)). Cysteines 180 and 224 form a disulfide. Positions 334 to 402 (SDSDNRRVRH…SSSSSSEEEN (69 aa)) are disordered. Over residues 346-397 (VSQNSEQENSSESSKSSSQSSSSSSSASSSSSSSSSSSSSSSSSSSSSSSSS) the composition is skewed to low complexity. N-linked (GlcNAc...) asparagine glycans are attached at residues asparagine 354, asparagine 579, asparagine 635, asparagine 1181, asparagine 1304, asparagine 1373, and asparagine 1506. A VWFD domain is found at 1448–1636 (QSCTLDKDKV…TYAMTQENCQ (189 aa)). Intrachain disulfides connect cysteine 1450/cysteine 1599 and cysteine 1472/cysteine 1635. 2 disordered regions span residues 1635-1655 (CQGPAPENKRRAEQSTCHEFP) and 1684-1723 (NRNKEHGRGNKSHQNNKKQYQANSQESGSSESRNDKKKHN). Residue asparagine 1693 is glycosylated (N-linked (GlcNAc...) asparagine). Residues 1700–1714 (KKQYQANSQESGSSE) show a composition bias toward polar residues.

It is found in the secreted. Functionally, precursor of the egg-yolk proteins that are sources of nutrients during embryonic development. The sequence is that of Vitellogenin-2 from Solenopsis invicta (Red imported fire ant).